Consider the following 290-residue polypeptide: MLENVKKSFFRVLCLGALCLGGLMAEQDPKELVGLGAKSYKEKDFTQAKKYFEKACDLKENSGCFNLGVLYYQGQGVEKNLKKAASFYAKACDLNYSNGCHLLGNLYYSGQGVSQNTNKALQYYSKACDLKYAEGCASLGGIYHDGKVVTRDFKKAVEYFTKACDLNDGDGCTILGSLYDAGRGTPKDLKKALASYDKACDLKDSPGCFNAGNMYHHGEGATKNFKEALARYSKACELENGGGCFNLGAMQYNGEGVTRNEKQAIENFKKGCKLGAKGACDILKQLKIKV.

An N-terminal signal peptide occupies residues 1–25 (MLENVKKSFFRVLCLGALCLGGLMA). 7 TPR repeats span residues 29–62 (PKEL…KENS), 64–98 (CFNL…NYSN), 100–133 (CHLL…LKYA), 134–170 (EGCA…NDGD), 172–205 (CTIL…LKDS), 206–242 (PGCF…ENGG), and 244–278 (CFNL…GAKG). Intrachain disulfides connect C56/C64, C92/C100, C128/C136, C164/C172, C200/C208, C236/C244, and C272/C280.

It belongs to the hcp beta-lactamase family.

It localises to the secreted. The enzyme catalyses a beta-lactam + H2O = a substituted beta-amino acid. May hydrolyze 6-aminopenicillinic acid and 7-aminocephalosporanic acid (ACA) derivatives. In Helicobacter pylori (strain ATCC 700392 / 26695) (Campylobacter pylori), this protein is Putative beta-lactamase HcpC (hcpC).